A 503-amino-acid chain; its full sequence is Lysine--tRNA ligase (503 aa).

Mg(2+) contacts are provided by Glu414 and Glu421.

This sequence belongs to the class-II aminoacyl-tRNA synthetase family. In terms of assembly, homodimer. Mg(2+) is required as a cofactor.

It localises to the cytoplasm. It carries out the reaction tRNA(Lys) + L-lysine + ATP = L-lysyl-tRNA(Lys) + AMP + diphosphate. The polypeptide is Lysine--tRNA ligase (Neisseria meningitidis serogroup B (strain ATCC BAA-335 / MC58)).